The primary structure comprises 342 residues: Phenylalanine--tRNA ligase alpha subunit (342 aa).

Position 260 (E260) interacts with Mg(2+).

It belongs to the class-II aminoacyl-tRNA synthetase family. Phe-tRNA synthetase alpha subunit type 1 subfamily. Tetramer of two alpha and two beta subunits. It depends on Mg(2+) as a cofactor.

The protein localises to the cytoplasm. The catalysed reaction is tRNA(Phe) + L-phenylalanine + ATP = L-phenylalanyl-tRNA(Phe) + AMP + diphosphate + H(+). This Mycobacterium avium (strain 104) protein is Phenylalanine--tRNA ligase alpha subunit.